We begin with the raw amino-acid sequence, 336 residues long: MSTKKHNLLANFASSDSRFTQQELPACKPILTPKWVILTFLVSGVVFIPLGVICLFASQGVIEIVDRYDTDCIPLSSRDNKVRYIQGLEDKRCNRTITVTKTMKNPVYVYYQLENYYQNHRRYVKSRQDGQLRSPKDEHETKSCAPEDTLGGQPIVPCGLVAWSLFNDTYDFTRNNQKLPVNKKDISWKSDRESKFGKNVFPKNFQKGSLIGGKSLDQDIPLSEQEDLIVWMRTAALPTFRKLYGKIDTDLQAGDTIKVLLQNNYNTYSFNGKKKLVLSTTSWLGGRNDFLGIAYLTVGSICLFLAVSFSVLYLAKPRQLGDPSYLSWNRSAGGGR.

Residues 36 to 56 (VILTFLVSGVVFIPLGVICLF) traverse the membrane as a helical segment. Asparagine 94 carries N-linked (GlcNAc...) asparagine glycosylation. Residues 127–142 (RQDGQLRSPKDEHETK) show a composition bias toward basic and acidic residues. The segment at 127-148 (RQDGQLRSPKDEHETKSCAPED) is disordered. N-linked (GlcNAc...) asparagine glycosylation is present at asparagine 167. Residues 290 to 310 (FLGIAYLTVGSICLFLAVSFS) form a helical membrane-spanning segment. Asparagine 329 carries N-linked (GlcNAc...) asparagine glycosylation.

This sequence belongs to the CDC50/LEM3 family. Expressed in flowers. May be restricted to pollen grains.

The protein localises to the membrane. The sequence is that of Putative ALA-interacting subunit 4 (ALIS4) from Arabidopsis thaliana (Mouse-ear cress).